A 948-amino-acid polypeptide reads, in one-letter code: Translation initiation factor IF-2 (948 aa).

3 disordered regions span residues 61–120 (IQAN…PALI), 162–243 (KSRE…TQSA), and 255–285 (QEKDKQEAKKAKKPSKPKATPTAKNNKSHKI). Over residues 68–78 (KNPEQDNKDDL) the composition is skewed to basic and acidic residues. A compositionally biased stretch (low complexity) spans 173 to 189 (SNTNNANSTNNANNVNN). The segment covering 190–207 (AKKEISEVKKQEQEIKRH) has biased composition (basic and acidic residues). A compositionally biased stretch (basic residues) spans 208 to 219 (ENIKRRTGFRVI). A compositionally biased stretch (polar residues) spans 230 to 243 (ENSVAESKKPTQSA). One can recognise a tr-type G domain in the interval 447–616 (ERPPVVTIMG…LIQADIMELK (170 aa)). The tract at residues 456-463 (GHVDHGKT) is G1. 456–463 (GHVDHGKT) is a binding site for GTP. The interval 481-485 (GITQH) is G2. The segment at 502–505 (DTPG) is G3. GTP contacts are provided by residues 502-506 (DTPGH) and 556-559 (NKMD). Positions 556 to 559 (NKMD) are G4. The tract at residues 592–594 (SAK) is G5.

The protein belongs to the TRAFAC class translation factor GTPase superfamily. Classic translation factor GTPase family. IF-2 subfamily.

The protein localises to the cytoplasm. One of the essential components for the initiation of protein synthesis. Protects formylmethionyl-tRNA from spontaneous hydrolysis and promotes its binding to the 30S ribosomal subunits. Also involved in the hydrolysis of GTP during the formation of the 70S ribosomal complex. This chain is Translation initiation factor IF-2, found in Helicobacter pylori (strain Shi470).